We begin with the raw amino-acid sequence, 361 residues long: S-adenosylmethionine:tRNA ribosyltransferase-isomerase (361 aa).

This sequence belongs to the QueA family. Monomer.

Its subcellular location is the cytoplasm. It carries out the reaction 7-aminomethyl-7-carbaguanosine(34) in tRNA + S-adenosyl-L-methionine = epoxyqueuosine(34) in tRNA + adenine + L-methionine + 2 H(+). The protein operates within tRNA modification; tRNA-queuosine biosynthesis. Transfers and isomerizes the ribose moiety from AdoMet to the 7-aminomethyl group of 7-deazaguanine (preQ1-tRNA) to give epoxyqueuosine (oQ-tRNA). The polypeptide is S-adenosylmethionine:tRNA ribosyltransferase-isomerase (Actinobacillus pleuropneumoniae serotype 7 (strain AP76)).